A 179-amino-acid polypeptide reads, in one-letter code: Large ribosomal subunit protein uL6 (179 aa).

This sequence belongs to the universal ribosomal protein uL6 family. In terms of assembly, part of the 50S ribosomal subunit.

Its function is as follows. This protein binds to the 23S rRNA, and is important in its secondary structure. It is located near the subunit interface in the base of the L7/L12 stalk, and near the tRNA binding site of the peptidyltransferase center. This is Large ribosomal subunit protein uL6 from Finegoldia magna (strain ATCC 29328 / DSM 20472 / WAL 2508) (Peptostreptococcus magnus).